The sequence spans 955 residues: Leucine-rich repeat-containing G-protein coupled receptor 4 (955 aa).

Positions 1–21 are cleaved as a signal peptide; the sequence is MGCPGWPLALFALLLASCSGG. The Extracellular portion of the chain corresponds to 22–547; it reads PSGVSSPAPC…LLGSWMIRLT (526 aa). Residues 26 to 59 form the LRRNT domain; sequence SSPAPCPAPCACDLDGGADCSGKGLVTVPDGLSV. Cystine bridges form between Cys31-Cys37 and Cys35-Cys45. LRR repeat units follow at residues 57 to 81, 83 to 105, 106 to 129, 131 to 153, 155 to 177, 178 to 201, 203 to 225, 226 to 249, 250 to 272, and 274 to 296; these read LSVF…AFKG, PYLE…ALSG, LKEL…SLKG, VSLQ…SFEG, VQLR…PLSN, LPSL…AFSN, SSLV…CFHG, LDNL…IRSL, PNLK…AFVK, and PLLR…AFQN. A glycan (N-linked (GlcNAc...) asparagine) is linked at Asn201. Asn296 and Asn316 each carry an N-linked (GlcNAc...) asparagine glycan. LRR repeat units lie at residues 320–343, 345–365, 366–389, 390–413, and 415–437; these read TNNL…FCQE, KMLR…GFEG, CSSL…TFQG, LAAL…AFVT, and KALT…GLHG. A disulfide bridge connects residues Cys341 and Cys366. Asn384 carries N-linked (GlcNAc...) asparagine glycosylation. Cystine bridges form between Cys472-Cys525 and Cys473-Cys478. The helical transmembrane segment at 548–568 threads the bilayer; it reads VWFIFLLALIFNVIVIVTMFA. Residues 569–578 lie on the Cytoplasmic side of the membrane; sequence SCSQLTSSKL. The helical transmembrane segment at 579–599 threads the bilayer; that stretch reads FIGLIAVSNLFMGVYTGTLTV. Residues 600 to 623 are Extracellular-facing; sequence LDTISWGQFAEFGIWWETGNGCKV. A disulfide bond links Cys621 and Cys696. A helical membrane pass occupies residues 624–644; the sequence is AGFLAIFSSESAIFFLMLAAI. Topologically, residues 645–666 are cytoplasmic; sequence ERSLSAKDIIKKEKHQHLRKFQ. Residues 667 to 687 traverse the membrane as a helical segment; that stretch reads VASLLAVLLAAAAGCLPLFHI. At 688–706 the chain is on the extracellular side; the sequence is GEFSSSPLCLPFPTGETPS. The chain crosses the membrane as a helical span at residues 707–727; sequence LGFTVTLVLLNSLAFLIMVIT. The Cytoplasmic portion of the chain corresponds to 728–759; it reads YTKLYCTIEKEDLSENAESSMIKHVAWLIFTN. The chain crosses the membrane as a helical span at residues 760-780; it reads CIFFCPVAFFSFAPLITAIYI. The Extracellular segment spans residues 781–786; it reads SPEIMK. The helical transmembrane segment at 787 to 807 threads the bilayer; that stretch reads SVTLIFLPLPACLNPVLYVFF. The Cytoplasmic portion of the chain corresponds to 808–955; the sequence is NPKFKEDWKL…YAYNIPRMKD (148 aa).

The protein belongs to the G-protein coupled receptor 1 family.

It localises to the cell membrane. Its function is as follows. Receptor for R-spondins that potentiates the canonical Wnt signaling pathway and is involved in the formation of various organs. Upon binding to R-spondins (RSPO1, RSPO2, RSPO3 or RSPO4), associates with phosphorylated LRP6 and frizzled receptors that are activated by extracellular Wnt receptors, triggering the canonical Wnt signaling pathway to increase expression of target genes. In contrast to classical G-protein coupled receptors, does not activate heterotrimeric G-proteins to transduce the signal. Its function as activator of the Wnt signaling pathway is required for the development of various organs, including liver, kidney, intestine, bone, reproductive tract and eye. May play a role in regulating the circadian rhythms of plasma lipids. Required for proper development of GnRH neurons (gonadotropin-releasing hormone expressing neurons) that control the release of reproductive hormones from the pituitary gland. This is Leucine-rich repeat-containing G-protein coupled receptor 4 (lgr4) from Xenopus tropicalis (Western clawed frog).